The primary structure comprises 229 residues: MHEAFTIEQLPPSWQEQLKDEWSQPYWSQLLAFLKSEYAQAKIYPKKENIFAALRSTPFDQVRVVILGQDPYHGEGQAHGLSFSVPRGQALPPSLRNIFQELHTDLGIRNESGCLQAWADQGVLLLNTVLTVRAGEAFSHAGRGWERFTDAIVTKLIQNRTHVIFVLWGNAARQKCNLLFQTKHQHAVLACPHPSPLAAHRGFFGCCHFSKINYLLKKQGKTMINWKIE.

Catalysis depends on Asp70, which acts as the Proton acceptor.

It belongs to the uracil-DNA glycosylase (UDG) superfamily. UNG family.

Its subcellular location is the cytoplasm. The enzyme catalyses Hydrolyzes single-stranded DNA or mismatched double-stranded DNA and polynucleotides, releasing free uracil.. Excises uracil residues from the DNA which can arise as a result of misincorporation of dUMP residues by DNA polymerase or due to deamination of cytosine. This is Uracil-DNA glycosylase from Chlamydia trachomatis serovar L2b (strain UCH-1/proctitis).